A 466-amino-acid polypeptide reads, in one-letter code: ATP synthase subunit beta (466 aa).

An ATP-binding site is contributed by 156–163 (GGAGVGKT).

The protein belongs to the ATPase alpha/beta chains family. As to quaternary structure, F-type ATPases have 2 components, CF(1) - the catalytic core - and CF(0) - the membrane proton channel. CF(1) has five subunits: alpha(3), beta(3), gamma(1), delta(1), epsilon(1). CF(0) has three main subunits: a(1), b(2) and c(9-12). The alpha and beta chains form an alternating ring which encloses part of the gamma chain. CF(1) is attached to CF(0) by a central stalk formed by the gamma and epsilon chains, while a peripheral stalk is formed by the delta and b chains.

The protein localises to the cell inner membrane. The enzyme catalyses ATP + H2O + 4 H(+)(in) = ADP + phosphate + 5 H(+)(out). Produces ATP from ADP in the presence of a proton gradient across the membrane. The catalytic sites are hosted primarily by the beta subunits. The chain is ATP synthase subunit beta from Polynucleobacter necessarius subsp. necessarius (strain STIR1).